The sequence spans 40 residues: Dolichyl-diphosphooligosaccharide--protein glycosyltransferase subunit 4 (40 aa).

The Lumenal segment spans residues 1-4; sequence MITD. A helical membrane pass occupies residues 5–25; that stretch reads VQLAIFSNVLGVFLFLLVVAY. Residues 26–40 lie on the Cytoplasmic side of the membrane; it reads HYINANTGKSSPKAK.

The protein belongs to the OST4 family. In terms of assembly, component of the oligosaccharyltransferase (OST) complex.

It localises to the endoplasmic reticulum membrane. In terms of biological role, subunit of the oligosaccharyl transferase (OST) complex that catalyzes the initial transfer of a defined glycan (Glc(3)Man(9)GlcNAc(2) in eukaryotes) from the lipid carrier dolichol-pyrophosphate to an asparagine residue within an Asn-X-Ser/Thr consensus motif in nascent polypeptide chains, the first step in protein N-glycosylation. N-glycosylation occurs cotranslationally and the complex associates with the Sec61 complex at the channel-forming translocon complex that mediates protein translocation across the endoplasmic reticulum (ER). All subunits are required for a maximal enzyme activity. This Drosophila persimilis (Fruit fly) protein is Dolichyl-diphosphooligosaccharide--protein glycosyltransferase subunit 4.